The following is a 1201-amino-acid chain: ATPase with bromodomain protein abo2 (1201 aa).

Disordered stretches follow at residues 1 to 223 (MRRR…MRGP) and 305 to 324 (CDSD…TSDV). Residues 13 to 24 (DDNEDNEEDDDY) show a composition bias toward acidic residues. The span at 29–38 (HSEKSEDHSN) shows a compositional bias: basic and acidic residues. Over residues 66-89 (FSSLQKHLNTETPSFSVSIENPSK) the composition is skewed to polar residues. Acidic residues predominate over residues 129-146 (TDNNEDESTTFKDEEDDL). Basic residues predominate over residues 212 to 221 (RRGRRKRKMR). The span at 312–323 (ELSSTSSEQTSD) shows a compositional bias: low complexity. 413–420 (GPPGTGKT) provides a ligand contact to ATP. A Bromo domain is found at 897–1026 (KIKNKIQVKL…AHAELNVDEL (130 aa)).

The protein belongs to the AAA ATPase family.

It is found in the nucleus. The catalysed reaction is ATP + H2O = ADP + phosphate + H(+). Functionally, probable ATPase which may play a role in nucleosome organization. In Schizosaccharomyces pombe (strain 972 / ATCC 24843) (Fission yeast), this protein is ATPase with bromodomain protein abo2.